The following is an 800-amino-acid chain: DNA topoisomerase 4 subunit A (800 aa).

The Topo IIA-type catalytic domain occupies 31–495 (LPDVRDGLKP…EIEEIKIDKE (465 aa)). The active-site O-(5'-phospho-DNA)-tyrosine intermediate is the Tyr-119.

It belongs to the type II topoisomerase GyrA/ParC subunit family. ParC type 2 subfamily. Heterotetramer composed of ParC and ParE.

The protein resides in the cell membrane. The catalysed reaction is ATP-dependent breakage, passage and rejoining of double-stranded DNA.. In terms of biological role, topoisomerase IV is essential for chromosome segregation. It relaxes supercoiled DNA. Performs the decatenation events required during the replication of a circular DNA molecule. The sequence is that of DNA topoisomerase 4 subunit A from Staphylococcus aureus (strain NCTC 8325 / PS 47).